We begin with the raw amino-acid sequence, 218 residues long: Ornithine decarboxylase antizyme 2 (218 aa).

It belongs to the ODC antizyme family. As to quaternary structure, interacts with ODC1 and thereby sterically blocks ODC homodimerization. In terms of tissue distribution, expressed ubiquitously in 24 hours embryos, with highest levels in telencephalon, lens, retina, cerebellum and hindbrain primordia.

Functionally, ornithine decarboxylase (ODC) antizyme protein that negatively regulates ODC activity and intracellular polyamine biosynthesis and uptake in response to increased intracellular polyamine levels. Binds to ODC monomers, inhibiting the assembly of the functional ODC homodimers. Does not target the ODC monomers for degradation, which allows a protein synthesis-independent restoration of ODC activity. The protein is Ornithine decarboxylase antizyme 2 (oaz1b) of Danio rerio (Zebrafish).